A 981-amino-acid chain; its full sequence is Ubiquitin carboxyl-terminal hydrolase 15 (981 aa).

Position 2 is an N-acetylalanine (Ala2). Residues 2–223 form a mediates interaction with SART3 region; sequence AEGGAADLDT…KNEDGTWPRG (222 aa). A DUSP domain is found at 7 to 118; the sequence is ADLDTQRSDI…GQEPIARKVV (112 aa). The disordered stretch occupies residues 216-237; the sequence is EDGTWPRGPSTPKSPGASNFST. Position 226 is a phosphothreonine (Thr226). Over residues 226-237 the composition is skewed to polar residues; it reads TPKSPGASNFST. Residues Ser229 and Ser242 each carry the phosphoserine modification. Residues 289–933 enclose the USP domain; the sequence is CGLSNLGNTC…AAYVLFYQRQ (645 aa). The active-site Nucleophile is the Cys298. At Thr602 the chain carries Phosphothreonine. Residues 629 to 694 are disordered; the sequence is GSLHCCKDQN…GGDNDSENGL (66 aa). The segment covering 656-673 has biased composition (acidic residues); sequence METDEPDDESSQDQELPS. The active-site Proton acceptor is His891. The tract at residues 952 to 981 is disordered; the sequence is SAATGIPLESDEDSNDNDNDIENENCMHTN. Positions 960–974 are enriched in acidic residues; that stretch reads ESDEDSNDNDNDIEN. A phosphoserine mark is found at Ser961 and Ser965.

It belongs to the peptidase C19 family. A homodimer structure has been reported; however it is unclear whether the protein form a homodimer in vivo. Identified in a complex with the COP9 signalosome complex (CSN). Interacts with SMAD1, SMAD2 and SMAD3; the interaction is direct. Forms a complex with SMURF2 and SMAD7. Interacts with TGFBR1. Interacts with SART3; the interaction is direct. May interact with RNF20 and RNF40. May interact with PRKN. Interacts with INCA1. In terms of assembly, (Microbial infection) Interacts with human papillomavirus type 16 protein E6. In terms of processing, phosphorylated. Phosphorylation protects against ubiquitination and subsequent degradation by the proteasome. Ubiquitinated, leading to degradation by the proteasome. As to expression, expressed in skeletal muscle, kidney, heart, placenta, liver, thymus, lung, and ovary, with little or no expression in other tissues.

It is found in the cytoplasm. It localises to the nucleus. Its subcellular location is the mitochondrion. It carries out the reaction Thiol-dependent hydrolysis of ester, thioester, amide, peptide and isopeptide bonds formed by the C-terminal Gly of ubiquitin (a 76-residue protein attached to proteins as an intracellular targeting signal).. In terms of biological role, hydrolase that removes conjugated ubiquitin from target proteins and regulates various pathways such as the TGF-beta receptor signaling, NF-kappa-B and RNF41/NRDP1-PRKN pathways. Acts as a key regulator of TGF-beta receptor signaling pathway, but the precise mechanism is still unclear: according to a report, acts by promoting deubiquitination of monoubiquitinated R-SMADs (SMAD1, SMAD2 and/or SMAD3), thereby alleviating inhibition of R-SMADs and promoting activation of TGF-beta target genes. According to another reports, regulates the TGF-beta receptor signaling pathway by mediating deubiquitination and stabilization of TGFBR1, leading to an enhanced TGF-beta signal. Able to mediate deubiquitination of monoubiquitinated substrates, 'Lys-27'-, 'Lys-48'- and 'Lys-63'-linked polyubiquitin chains. May also regulate gene expression and/or DNA repair through the deubiquitination of histone H2B. Acts as an inhibitor of mitophagy by counteracting the action of parkin (PRKN): hydrolyzes cleavage of 'Lys-48'- and 'Lys-63'-linked polyubiquitin chains attached by parkin on target proteins such as MFN2, thereby reducing parkin's ability to drive mitophagy. Acts as an associated component of COP9 signalosome complex (CSN) and regulates different pathways via this association: regulates NF-kappa-B by mediating deubiquitination of NFKBIA and deubiquitinates substrates bound to VCP. Involved in endosome organization by mediating deubiquitination of SQSTM1: ubiquitinated SQSTM1 forms a molecular bridge that restrains cognate vesicles in the perinuclear region and its deubiquitination releases target vesicles for fast transport into the cell periphery. Acts as a negative regulator of antifungal immunity by mediating 'Lys-27'-linked deubiquitination of CARD9, thereby inactivating CARD9. Functionally, (Microbial infection) Protects APC and human papillomavirus type 16 protein E6 against degradation via the ubiquitin proteasome pathway. The polypeptide is Ubiquitin carboxyl-terminal hydrolase 15 (Homo sapiens (Human)).